The sequence spans 360 residues: Probable dual-specificity RNA methyltransferase RlmN (360 aa).

Glu-97 (proton acceptor) is an active-site residue. The region spanning 103–330 (DGDRLTFCIS…TAVRRSRGLD (228 aa)) is the Radical SAM core domain. The cysteines at positions 110 and 335 are disulfide-linked. 3 residues coordinate [4Fe-4S] cluster: Cys-117, Cys-121, and Cys-124. S-adenosyl-L-methionine is bound by residues 165–166 (GE), Ser-197, 220–222 (SIH), and His-292. Cys-335 functions as the S-methylcysteine intermediate in the catalytic mechanism.

Belongs to the radical SAM superfamily. RlmN family. [4Fe-4S] cluster is required as a cofactor.

It localises to the cytoplasm. The enzyme catalyses adenosine(2503) in 23S rRNA + 2 reduced [2Fe-2S]-[ferredoxin] + 2 S-adenosyl-L-methionine = 2-methyladenosine(2503) in 23S rRNA + 5'-deoxyadenosine + L-methionine + 2 oxidized [2Fe-2S]-[ferredoxin] + S-adenosyl-L-homocysteine. It carries out the reaction adenosine(37) in tRNA + 2 reduced [2Fe-2S]-[ferredoxin] + 2 S-adenosyl-L-methionine = 2-methyladenosine(37) in tRNA + 5'-deoxyadenosine + L-methionine + 2 oxidized [2Fe-2S]-[ferredoxin] + S-adenosyl-L-homocysteine. Its function is as follows. Specifically methylates position 2 of adenine 2503 in 23S rRNA and position 2 of adenine 37 in tRNAs. In Gemmatimonas aurantiaca (strain DSM 14586 / JCM 11422 / NBRC 100505 / T-27), this protein is Probable dual-specificity RNA methyltransferase RlmN.